The chain runs to 241 residues: Ribosomal RNA small subunit methyltransferase G (241 aa).

Residues glycine 96, phenylalanine 101, 119–121 (EAS), 147–148 (VE), and arginine 166 each bind S-adenosyl-L-methionine.

This sequence belongs to the methyltransferase superfamily. RNA methyltransferase RsmG family.

The protein resides in the cytoplasm. It catalyses the reaction guanosine(527) in 16S rRNA + S-adenosyl-L-methionine = N(7)-methylguanosine(527) in 16S rRNA + S-adenosyl-L-homocysteine. Functionally, specifically methylates the N7 position of guanine in position 527 of 16S rRNA. This chain is Ribosomal RNA small subunit methyltransferase G, found in Syntrophus aciditrophicus (strain SB).